The primary structure comprises 620 residues: Kelch-like protein 8 (620 aa).

Positions 1–10 are enriched in polar residues; it reads MASDSMSSKQ. Positions 1–35 are disordered; that stretch reads MASDSMSSKQARNHITKGKRQQQHQQIKNRSSISD. N-acetylalanine is present on A2. Basic residues predominate over residues 11–22; sequence ARNHITKGKRQQ. A compositionally biased stretch (polar residues) spans 23-34; that stretch reads QHQQIKNRSSIS. The 68-residue stretch at 67–134 folds into the BTB domain; the sequence is CDVTLKVGSK…VYSSRLTLTV (68 aa). Residues 169–270 form the BACK domain; sequence CLAVRAFAES…LPVDFLMGVV (102 aa). Kelch repeat units lie at residues 319–366, 367–413, 415–460, 462–507, 508–554, and 556–601; these read VLFC…SVEG, KVYA…SLGG, IYAI…ALVN, VYAV…KLHG, CLYV…TVMG, and IFAV…VCSC.

In terms of assembly, component of the BCR(KLHL8) E3 ubiquitin ligase complex, at least composed of CUL3, KLHL8 and RBX1. Interacts with RAPSN.

It functions in the pathway protein modification; protein ubiquitination. Functionally, substrate-specific adapter of a BCR (BTB-CUL3-RBX1) E3 ubiquitin ligase complex required for The BCR(KLHL8) ubiquitin ligase complex mediates ubiquitination and degradation of RAPSN. The chain is Kelch-like protein 8 (KLHL8) from Homo sapiens (Human).